The primary structure comprises 170 residues: Myosin regulatory light chain 2, skeletal muscle isoform type 1 (170 aa).

A2 bears the N,N,N-trimethylalanine mark. Phosphoserine occurs at positions 16 and 17. A phosphothreonine mark is found at T26 and T36. An EF-hand 1 domain is found at 26-61 (TQIQEFKEAFTVIDQNRDGIIDKEDLRDTFAAMGRL). The Ca(2+) site is built by D39, N41, D43, and D50. The residue at position 76 (S76) is a Phosphoserine. 2 consecutive EF-hand domains span residues 96–131 (DPED…QCDR) and 132–167 (FSQE…GDAK). The residue at position 102 (T102) is a Phosphothreonine.

Myosin is a hexamer of 2 heavy chains and 4 light chains.

The chain is Myosin regulatory light chain 2, skeletal muscle isoform type 1 from Oryctolagus cuniculus (Rabbit).